Reading from the N-terminus, the 214-residue chain is S-crystallin 1 (214 aa).

A GST N-terminal domain is found at 2–79; it reads PSYTLHYFNH…YLAREFGFHG (78 aa). The GST C-terminal domain maps to 81-214; the sequence is NNMEMARVDF…YLQRRCRTDF (134 aa).

It belongs to the GST superfamily. In terms of tissue distribution, lens.

Its function is as follows. S-crystallins are structural components of squids and octopi eye lens. Contains relatively little GST activity (1/1000 of that of mammalian GST enzyme). The sequence is that of S-crystallin 1 (OCTS1) from Octopus vulgaris (Common octopus).